A 76-amino-acid polypeptide reads, in one-letter code: Mating-type pheromone BBP1(1) (76 aa).

Cys73 carries the post-translational modification Cysteine methyl ester. A lipid anchor (S-farnesyl cysteine) is attached at Cys73. A propeptide spans 74 to 76 (VVA) (removed in mature form).

The protein localises to the cell membrane. Its function is as follows. Activates B-regulated development. The polypeptide is Mating-type pheromone BBP1(1) (BBP1(1)) (Schizophyllum commune (Split gill fungus)).